The following is a 34-amino-acid chain: Tau-theraphotoxin-Pc1c (34 aa).

3 disulfides stabilise this stretch: Cys-2–Cys-16, Cys-9–Cys-21, and Cys-15–Cys-28. Phe-34 is modified (phenylalanine amide).

This sequence belongs to the neurotoxin 10 (Hwtx-1) family. 62 (Vatx) subfamily. In terms of tissue distribution, expressed by the venom gland.

It localises to the secreted. Its function is as follows. Selectively activates mammalian TRPV1, or capsaicin receptor, a non-selective cation channel expressed by sensory neurons of the pain pathway. Is more potent than VaTx1 and VaTx2. Interacts with distinct regions of the channel than capsaicin, since it only acts on the extracellular face of the channel, and capsaicin binds to the cytosolic side. Also activates avian TRPV1, which is insensitive to capsaicin. In mice, elicits pain-related behaviors, such as licking and flinching of the affected limb. The paw of toxin-injected mice shows substantial edema. This Psalmopoeus cambridgei (Trinidad chevron tarantula) protein is Tau-theraphotoxin-Pc1c.